A 292-amino-acid chain; its full sequence is MEMO1 family protein PF1638 (292 aa).

The protein belongs to the MEMO1 family.

This Pyrococcus furiosus (strain ATCC 43587 / DSM 3638 / JCM 8422 / Vc1) protein is MEMO1 family protein PF1638.